Reading from the N-terminus, the 205-residue chain is MSTMNPDYDYLFKLLLIGDSGVGKSCLLLRFADDTYTESYISTIGVDFKIRTIELDGKTIKLQIWDTAGQERFRTITSSYYRGAHGIIVVYDVTDQESFNNVKQWLQEIDRYASENVNKLLVGNKSDLTTKKVVDFTTAKEYADQLGIPFLETSAKNATNVEQAFMTMAAEIKNRMGPITAASDSKPSVKINSSTPVSANKGGCC.

GTP-binding positions include 18–26, 36–43, 66–70, 124–127, and 154–156; these read GDSGVGKSC, YTESYIST, DTAGQ, NKSD, and SAK. The Effector region motif lies at 40 to 48; that stretch reads YISTIGVDF. The segment covering 183-198 has biased composition (polar residues); it reads SDSKPSVKINSSTPVS. The disordered stretch occupies residues 183–205; that stretch reads SDSKPSVKINSSTPVSANKGGCC. S-geranylgeranyl cysteine attachment occurs at residues Cys-204 and Cys-205.

The protein belongs to the small GTPase superfamily. Rab family.

The protein localises to the golgi apparatus. It is found in the endoplasmic reticulum. Probably required for transit of protein from the ER through Golgi compartment. The protein is Ras-related protein Rab-1A (RAB1A) of Lymnaea stagnalis (Great pond snail).